The primary structure comprises 426 residues: Elongation factor 1-alpha (426 aa).

One can recognise a tr-type G domain in the interval 5–221 (KPHINLAVIG…NALKEPEKPT (217 aa)). The interval 14-21 (GHIDHGKS) is G1. Position 14–21 (14–21 (GHIDHGKS)) interacts with GTP. Residue Ser-21 coordinates Mg(2+). Residues 70–74 (GITID) are G2. A G3 region spans residues 91–94 (DCPG). Residues 91–95 (DCPGH) and 146–149 (NKMD) contribute to the GTP site. Residues 146 to 149 (NKMD) are G4. Residues 185–187 (SAF) form a G5 region.

The protein belongs to the TRAFAC class translation factor GTPase superfamily. Classic translation factor GTPase family. EF-Tu/EF-1A subfamily.

The protein localises to the cytoplasm. It catalyses the reaction GTP + H2O = GDP + phosphate + H(+). Its function is as follows. GTP hydrolase that promotes the GTP-dependent binding of aminoacyl-tRNA to the A-site of ribosomes during protein biosynthesis. This chain is Elongation factor 1-alpha, found in Methanocella arvoryzae (strain DSM 22066 / NBRC 105507 / MRE50).